The primary structure comprises 182 residues: Ribosome-recycling factor (182 aa).

A disordered region spans residues 136-156; sequence VKKQEKDGDFSEDQSRDEQDS.

Belongs to the RRF family.

It is found in the cytoplasm. Responsible for the release of ribosomes from messenger RNA at the termination of protein biosynthesis. May increase the efficiency of translation by recycling ribosomes from one round of translation to another. This chain is Ribosome-recycling factor, found in Synechococcus sp. (strain CC9902).